Here is an 882-residue protein sequence, read N- to C-terminus: Homeobox-leucine zipper protein ROC3 (882 aa).

The segment at 104–144 is disordered; sequence DVDDDHKPQHSGHDQPPDAAQPSGAAGGNAKKKRYHRHTAH. Over residues 107–119 the composition is skewed to basic and acidic residues; sequence DDHKPQHSGHDQP. Basic residues predominate over residues 133 to 143; it reads AKKKRYHRHTA. Residues 134–193 constitute a DNA-binding region (homeobox); it reads KKKRYHRHTAHQIQQMEALFKECPHPDDKQRLKLSQELGLKPRQVKFWFQNRRTQMKAQQ. A coiled-coil region spans residues 200-263; sequence ILRAENENLK…LDRLACIATR (64 aa). In terms of domain architecture, START spans 340 to 584; the sequence is QEQDKQLVVD…LQRQCERLAS (245 aa). Over residues 782 to 816 the composition is skewed to low complexity; sequence AAAPTISSSTTTTTGNGNGETSSTPPRNSSSNNNN. The tract at residues 782 to 820 is disordered; sequence AAAPTISSSTTTTTGNGNGETSSTPPRNSSSNNNNADEL.

The protein belongs to the HD-ZIP homeobox family. Class IV subfamily.

The protein resides in the nucleus. Its function is as follows. Probable transcription factor. The sequence is that of Homeobox-leucine zipper protein ROC3 (ROC3) from Oryza sativa subsp. japonica (Rice).